We begin with the raw amino-acid sequence, 198 residues long: Glycerol-3-phosphate acyltransferase 2 (198 aa).

The next 4 membrane-spanning stretches (helical) occupy residues 4–24 (TYLL…LVVG), 71–91 (LPII…AVLG), 113–133 (LLCY…SLLF), and 147–167 (VVAV…AMCL).

It belongs to the PlsY family. Probably interacts with PlsX.

Its subcellular location is the cell membrane. It carries out the reaction an acyl phosphate + sn-glycerol 3-phosphate = a 1-acyl-sn-glycero-3-phosphate + phosphate. The protein operates within lipid metabolism; phospholipid metabolism. Functionally, catalyzes the transfer of an acyl group from acyl-phosphate (acyl-PO(4)) to glycerol-3-phosphate (G3P) to form lysophosphatidic acid (LPA). This enzyme utilizes acyl-phosphate as fatty acyl donor, but not acyl-CoA or acyl-ACP. The sequence is that of Glycerol-3-phosphate acyltransferase 2 from Bacillus cereus (strain ATCC 10987 / NRS 248).